The primary structure comprises 246 residues: MKMKEFLDLLNESRLTVTLTGAGISTPSGIPDFRGPNGIYKKYSQNVFDIDFFYSHPEEFYRFAKEGIFPMLQAKPNLAHVLLAKLEEKGLIEAVITQNIDRLHQRAGSKKVIELHGNVEEYYCVRCEKKYTVEDVIKKLESSDVPLCDDCNSLIRPNIVFFGENLPQDALREAIGLSSRASLMIVLGSSLVVYPAAELPLITVRSGGKLVIVNLGETPFDDIATLKYNMDVVEFARRVMEEGGIS.

The Deacetylase sirtuin-type domain occupies Met1 to Ser246. Ala22, Thr26, Phe33, Arg34, Gln98, Ile100, Asp101, and His116 together coordinate NAD(+). Phe33 is a binding site for nicotinamide. Ile100 and Asp101 together coordinate nicotinamide. The active-site Proton acceptor is the His116. Positions 124, 127, 148, and 151 each coordinate Zn(2+). Residues Ser189, Ser190, Asn214, Leu215, Gly216, Asp231, and Val232 each coordinate NAD(+).

This sequence belongs to the sirtuin family. Class U subfamily. The cofactor is Zn(2+).

The protein resides in the cytoplasm. It carries out the reaction N(6)-acetyl-L-lysyl-[protein] + NAD(+) + H2O = 2''-O-acetyl-ADP-D-ribose + nicotinamide + L-lysyl-[protein]. With respect to regulation, non-competitively inhibited by nicotinamide in vitro and in vivo, but not by nicotinic acid. Nicotinamide inhibits the deacetylation activity by reacting with a reaction intermediate. NAD-dependent protein deacetylase which modulates the activities of several enzymes which are inactive in their acetylated form. Also has depropionylation activity in vitro. Also able to ADP-ribosylate peptide substrates with Arg or Lys in the +2 position. The role of this function in vivo is not clear. The protein is NAD-dependent protein deacetylase of Thermotoga maritima (strain ATCC 43589 / DSM 3109 / JCM 10099 / NBRC 100826 / MSB8).